A 96-amino-acid polypeptide reads, in one-letter code: Protein YddL (96 aa).

Residues 1-21 form the signal peptide; it reads MKLKIVAVVVTGLLAANVAHA.

In Escherichia coli (strain K12), this protein is Protein YddL (yddL).